Here is a 212-residue protein sequence, read N- to C-terminus: Probable nicotinate-nucleotide adenylyltransferase (212 aa).

This sequence belongs to the NadD family.

It carries out the reaction nicotinate beta-D-ribonucleotide + ATP + H(+) = deamido-NAD(+) + diphosphate. It participates in cofactor biosynthesis; NAD(+) biosynthesis; deamido-NAD(+) from nicotinate D-ribonucleotide: step 1/1. In terms of biological role, catalyzes the reversible adenylation of nicotinate mononucleotide (NaMN) to nicotinic acid adenine dinucleotide (NaAD). The protein is Probable nicotinate-nucleotide adenylyltransferase of Methylibium petroleiphilum (strain ATCC BAA-1232 / LMG 22953 / PM1).